The sequence spans 184 residues: Protein DESIGUAL 3 (184 aa).

The N-terminal stretch at 1–24 (MESELGFLVSVVIICADITATVLG) is a signal peptide. A compositionally biased stretch (basic residues) spans 34–45 (APHHHHQQHSRH). The interval 34-53 (APHHHHQQHSRHSGSGCRRS) is disordered. The next 3 helical transmembrane spans lie at 62-82 (GVAA…LGGC), 99-119 (ILAV…YSTL), and 140-160 (FFLI…AYYV). The N-linked (GlcNAc...) asparagine glycan is linked to N180.

It belongs to the DESIGUAL family. Mainly expressed in roots, inflorescences and developing leaves, and, at low levels, in mature leaves.

The protein resides in the endoplasmic reticulum membrane. Its function is as follows. Involved, partially redundantly with VCC/DEAL1 and DEAL2, to ensure bilateral symmetry development and early leaf margin patterning, probably via the regulation of auxin and CUC2 distribution. This chain is Protein DESIGUAL 3, found in Arabidopsis thaliana (Mouse-ear cress).